The sequence spans 105 residues: MALPQLTDEQRAAALEKAAAARRARAELKDRLKRGGTNLKQVLTDAETDEVLGKMKVSALLEALPKVGKVKAQEIMTELEIAPTRRLRGLGDRQRKALLEKFDQS.

Positions 64–71 match the H2TH motif, binds DNA motif; that stretch reads LPKVGKVK. The lid, binds DNA stretch occupies residues 82–94; the sequence is APTRRLRGLGDRQ.

This sequence belongs to the actinobacterial IHF (aIHF) family. As to quaternary structure, binds DNA as a monomer. In terms of assembly, (Microbial infection) Forms a complex with L5 Int and attP DNA. The complex binds attB to form products.

The protein localises to the cytoplasm. It localises to the nucleoid. A nucleoid-associated protein (NAP) that binds DNA without any sequence specificity. Compacts DNA. Binds along the whole chromosome in a dynamic manner, has equal affinity for the oriC site, attB and a randon 62% GC-rich sequence. Plays a role in transcription regulation. Functionally, (Microbial infection) Stimulates temperate Mycobacterium phage L5 Int-mediated recombination in vitro using supercoiled attP (phage attachment site) DNA, linear attB DNA (bacterial attachment site) and L5 integrase (L5 Int or Int-L5, AC P22884). mIHF acts on L5 Int to stimulate formation of a specific intasome complex. mIHF probably stabilizes a sharp bend in the DNA during phage integration. The chain is Integration host factor from Mycolicibacterium smegmatis (strain ATCC 700084 / mc(2)155) (Mycobacterium smegmatis).